Here is a 508-residue protein sequence, read N- to C-terminus: GMP synthase [glutamine-hydrolyzing] (508 aa).

A Glutamine amidotransferase type-1 domain is found at 1 to 189 (MILVLDFGSQ…ALLVCGCEKT (189 aa)). The Nucleophile role is filled by cysteine 78. Residues histidine 163 and glutamate 165 contribute to the active site. Residues 190-383 (WGMQHFAQRE…LGVSQDFLMR (194 aa)) enclose the GMPS ATP-PPase domain. 217-223 (SGGVDST) is an ATP binding site.

In terms of assembly, homodimer.

It carries out the reaction XMP + L-glutamine + ATP + H2O = GMP + L-glutamate + AMP + diphosphate + 2 H(+). The protein operates within purine metabolism; GMP biosynthesis; GMP from XMP (L-Gln route): step 1/1. Catalyzes the synthesis of GMP from XMP. This is GMP synthase [glutamine-hydrolyzing] from Helicobacter pylori (strain P12).